A 779-amino-acid chain; its full sequence is Endonuclease MutS2 (779 aa).

328–335 (GPNTGGKT) serves as a coordination point for ATP. In terms of domain architecture, Smr spans 704–779 (LDLRGKRYEE…GSGATIVTLG (76 aa)).

This sequence belongs to the DNA mismatch repair MutS family. MutS2 subfamily. Homodimer. Binds to stalled ribosomes, contacting rRNA.

Its function is as follows. Endonuclease that is involved in the suppression of homologous recombination and thus may have a key role in the control of bacterial genetic diversity. In terms of biological role, acts as a ribosome collision sensor, splitting the ribosome into its 2 subunits. Detects stalled/collided 70S ribosomes which it binds and splits by an ATP-hydrolysis driven conformational change. Acts upstream of the ribosome quality control system (RQC), a ribosome-associated complex that mediates the extraction of incompletely synthesized nascent chains from stalled ribosomes and their subsequent degradation. Probably generates substrates for RQC. This Streptococcus pyogenes serotype M1 protein is Endonuclease MutS2.